We begin with the raw amino-acid sequence, 848 residues long: Transforming growth factor beta receptor type 3 (848 aa).

An N-terminal signal peptide occupies residues 1–20; that stretch reads MTLHCVVALFALISSCLATA. Residues 21–784 lie on the Extracellular side of the membrane; the sequence is GPEPGVQCAL…IFHGLDTLTV (764 aa). 2 N-linked (GlcNAc...) asparagine glycosylation sites follow: Asn34 and Asn141. A disulfide bridge connects residues Cys52 and Cys197. The tract at residues 390-448 is disordered; that stretch reads SGEGAARHGGLPFPFPYIPRRGRQDGGKDRLPRPKDPVVPSIQLLPGPREPQEAQGSRD. Positions 411-425 are enriched in basic and acidic residues; the sequence is GRQDGGKDRLPRPKD. Positions 454–729 constitute a ZP domain; sequence RCDSEKMLVA…PKCVLPDEAC (276 aa). A glycan (N-linked (GlcNAc...) asparagine) is linked at Asn491. Ser529, Ser533, and Ser544 each carry an O-linked (Xyl...) (glycosaminoglycan) serine glycan. N-linked (GlcNAc...) asparagine glycans are attached at residues Asn570, Asn589, and Asn696. Disulfide bonds link Cys638–Cys704, Cys659–Cys729, and Cys709–Cys722. The interaction with TGF-beta ligand stretch occupies residues 736–750; sequence MIWAMMQNKKTFTKP. Residues 785-806 form a helical membrane-spanning segment; sequence MGIAFAAFVIGALLTGALWYIY. Over 807 to 848 the chain is Cytoplasmic; it reads SHTGDSAGRQPVPTSPPASENSSAAHSLGSTQSTPCSSSSAA. Residues 813–848 form a disordered region; it reads AGRQPVPTSPPASENSSAAHSLGSTQSTPCSSSSAA. Residues 833 to 848 show a composition bias toward low complexity; it reads SLGSTQSTPCSSSSAA. At Thr837 the chain carries Phosphothreonine.

In terms of assembly, forms homodimers and homooligomers. Interacts with DYNLT4. Interacts with integrin ITGA5:ITGB1; this interaction promotes the internalization and trafficking of ITGA5:ITGB1 into endocytic vesicles. Interacts with TGFB1, BMP2, BMP5, BMP7 or GDF5 and inhibin A via the ligand binding domains. Interacts with ALK3/BMPR1A; this interaction results in the cell surface retention of BMPR1A. Interacts with ALK6/BMPR1B; this interaction enhances BMPR1B-mediated stimulation of the BMP signaling pathway. Interacts with the scaffolding protein beta-arrestin2/ARRB2; this interaction mediates internalization of TGFBR3 and thus regulates migration, actin cytoskeleton and activation of CDC42. In terms of processing, extensively modified by glycosaminoglycan groups (GAG). Post-translationally, phosphorylated in the cytoplasmic domain by the type II receptor TGFBR2 at THR-837 to mediate recruitment of ARRB2 and subsequent internalization of TGFBR2 and TGFBR3.

Its subcellular location is the cell membrane. It localises to the secreted. It is found in the extracellular space. The protein localises to the extracellular matrix. Its function is as follows. Cell surface receptor that regulates diverse cellular processes including cell proliferation, differentiation, migration, and apoptosis. Initiates BMP, inhibin, and TGF-beta signaling pathways by interacting with different ligands including TGFB1, BMP2, BMP5, BMP7 or GDF5. Alternatively, acts as a cell surface coreceptor for BMP ligands, serving to enhance ligand binding by differentially regulating BMPR1A/ALK3 and BMPR1B/ALK6 receptor trafficking. Promotes epithelial cell adhesion, focal adhesion formation and integrin signaling during epithelial cell spreading on fibronectin. By interacting with the scaffolding protein beta-arrestin2/ARRB2, regulates migration or actin cytoskeleton and promotes the activation of CDC42 as well as the inhibition of NF-kappa-B. In gonadotrope cells, acts as an inhibin A coreceptor and regulates follicle-stimulating hormone (FSH) levels and female fertility. Plays a role in the inhibition of directed and random cell migration in epithelial cells by altering the actin cytoskeletal organization. Participates in epithelial-mesenchymal transformation (EMT) upon binding to BMP2 or TGFB2, by activating the PAR6/SMURF1/RHOA pathway. The sequence is that of Transforming growth factor beta receptor type 3 (TGFBR3) from Sus scrofa (Pig).